We begin with the raw amino-acid sequence, 292 residues long: Formamidopyrimidine-DNA glycosylase (292 aa).

Residue P2 is the Schiff-base intermediate with DNA of the active site. E3 (proton donor) is an active-site residue. K58 acts as the Proton donor; for beta-elimination activity in catalysis. 3 residues coordinate DNA: H103, R122, and K165. An FPG-type zinc finger spans residues 256-292 (RVYDRALHPCPTPGCKGEISRITQGGRSSFFCSMCQK). R282 (proton donor; for delta-elimination activity) is an active-site residue.

Belongs to the FPG family. As to quaternary structure, monomer. Zn(2+) serves as cofactor.

The catalysed reaction is Hydrolysis of DNA containing ring-opened 7-methylguanine residues, releasing 2,6-diamino-4-hydroxy-5-(N-methyl)formamidopyrimidine.. It catalyses the reaction 2'-deoxyribonucleotide-(2'-deoxyribose 5'-phosphate)-2'-deoxyribonucleotide-DNA = a 3'-end 2'-deoxyribonucleotide-(2,3-dehydro-2,3-deoxyribose 5'-phosphate)-DNA + a 5'-end 5'-phospho-2'-deoxyribonucleoside-DNA + H(+). Its function is as follows. Involved in base excision repair of DNA damaged by oxidation or by mutagenic agents. Acts as a DNA glycosylase that recognizes and removes damaged bases. Has a preference for oxidized purines, such as 7,8-dihydro-8-oxoguanine (8-oxoG). Has AP (apurinic/apyrimidinic) lyase activity and introduces nicks in the DNA strand. Cleaves the DNA backbone by beta-delta elimination to generate a single-strand break at the site of the removed base with both 3'- and 5'-phosphates. The protein is Formamidopyrimidine-DNA glycosylase of Methylocella silvestris (strain DSM 15510 / CIP 108128 / LMG 27833 / NCIMB 13906 / BL2).